A 185-amino-acid polypeptide reads, in one-letter code: Large ribosomal subunit protein uL10 (185 aa).

The disordered stretch occupies residues 165–185 (LRAKKEEQGGAGTPAPAEAAE).

This sequence belongs to the universal ribosomal protein uL10 family. As to quaternary structure, part of the ribosomal stalk of the 50S ribosomal subunit. The N-terminus interacts with L11 and the large rRNA to form the base of the stalk. The C-terminus forms an elongated spine to which L12 dimers bind in a sequential fashion forming a multimeric L10(L12)X complex.

Forms part of the ribosomal stalk, playing a central role in the interaction of the ribosome with GTP-bound translation factors. In Streptomyces griseus subsp. griseus (strain JCM 4626 / CBS 651.72 / NBRC 13350 / KCC S-0626 / ISP 5235), this protein is Large ribosomal subunit protein uL10.